The primary structure comprises 116 residues: Large ribosomal subunit protein uL24 (116 aa).

Residues 1–27 form a disordered region; that stretch reads MAGRKSSTPTRHKMHVKTGDTVQVISG.

Belongs to the universal ribosomal protein uL24 family. As to quaternary structure, part of the 50S ribosomal subunit.

One of two assembly initiator proteins, it binds directly to the 5'-end of the 23S rRNA, where it nucleates assembly of the 50S subunit. In terms of biological role, one of the proteins that surrounds the polypeptide exit tunnel on the outside of the subunit. This chain is Large ribosomal subunit protein uL24, found in Picosynechococcus sp. (strain ATCC 27264 / PCC 7002 / PR-6) (Agmenellum quadruplicatum).